The sequence spans 237 residues: Bax inhibitor 1 (237 aa).

Over 1 to 29 (MNIFDRKINFDALLKFSHITPSTQQHLKK) the chain is Cytoplasmic. Lys7 is covalently cross-linked (Glycyl lysine isopeptide (Lys-Gly) (interchain with G-Cter in ubiquitin)). A helical membrane pass occupies residues 30-50 (VYASFALCMFVAAAGAYVHVV). At 51 to 52 (TR) the chain is on the lumenal side. The chain crosses the membrane as a helical span at residues 53–73 (FIQAGLLSALGALALMICLMA). At 74-86 (TPHSHETEQKRLG) the chain is on the cytoplasmic side. Residues 87 to 107 (LLAGFAFLTGVGLGPALELCI) traverse the membrane as a helical segment. Topologically, residues 108–112 (AINPS) are lumenal. The chain crosses the membrane as a helical span at residues 113–133 (ILPTAFMGTAMIFTCFSLSAL). Residues 134–139 (YARRRS) are Cytoplasmic-facing. The helical transmembrane segment at 140 to 160 (YLFLGGILMSAMSLMFVSSLG) threads the bilayer. At 161–166 (NLFFGS) the chain is on the lumenal side. Residues 167–187 (IWLFQANLYMGLLVMCGFVLF) form a helical membrane-spanning segment. The Cytoplasmic segment spans residues 188–206 (DTQLIIEKAEHGDKDYIWH). Residues 207-227 (CIDLFLDFVTLFRKLMLILAF) constitute an intramembrane region (helical). Residues 228-237 (NEKDKKKEKK) are Cytoplasmic-facing.

It belongs to the BI1 family. Interacts with BCL2 and BCL2L1. Interacts with ERN1. In terms of processing, ubiquitinated by BFAR, leading to proteasomal degradation. As to expression, highly abundant in adult testis.

It is found in the endoplasmic reticulum membrane. Functionally, endoplasmic reticulum (ER)-resident protein that confers cellular protection as an anti-apoptotic protein by limiting multiple stress-inducing pathways surrounding the endoplasmic reticulum and mitochondria. Inhibits the activities of the key sensor for the endoplasmic reticulum unfolded protein response IRE1alpha/ERN1 both directly and by blocking BAX/BAK binding. Modulates ER calcium homeostasis by acting as a calcium-leak channel. Negatively regulates autophagy and autophagosome formation, especially during periods of nutrient deprivation, and reduces cell survival during starvation. The sequence is that of Bax inhibitor 1 (Tmbim6) from Rattus norvegicus (Rat).